A 320-amino-acid chain; its full sequence is Apolipoprotein E (320 aa).

Residues Met-1–Gly-18 form the signal peptide. 8 tandem repeats follow at residues Ala-82–Ser-103, Pro-104–Gly-125, Ala-126–Gly-147, Gln-148–Leu-169, Arg-170–Glu-191, Arg-192–Ala-213, Thr-214–Arg-236, and Ala-237–Glu-258. Residues Ala-82 to Glu-199 form an 8 X 22 AA approximate tandem repeats region. Met-145 is modified (methionine sulfoxide). At Ser-149 the chain carries Phosphoserine. An LDL and other lipoprotein receptors binding region spans residues His-160–Arg-170. Position 164–167 (Leu-164–Arg-167) interacts with heparin. Residues Ala-212 to Met-293 form a lipid-binding and lipoprotein association region. Gly-232 to Met-239 contacts heparin. A homooligomerization region spans residues Gln-269 to His-320. A specificity for association with VLDL region spans residues Arg-281 to Met-293.

This sequence belongs to the apolipoprotein A1/A4/E family. In terms of assembly, homotetramer. May interact with ABCA1; functionally associated with ABCA1 in the biogenesis of HDLs. May interact with APP/A4 amyloid-beta peptide; the interaction is extremely stable in vitro but its physiological significance is unclear. May interact with MAPT. May interact with MAP2. In the cerebrospinal fluid, interacts with secreted SORL1. Interacts with PMEL; this allows the loading of PMEL luminal fragment on ILVs to induce fibril nucleation. Post-translationally, APOE exists as multiple glycosylated and sialylated glycoforms within cells and in plasma. The extent of glycosylation and sialylation are tissue and context specific. Glycated in plasma VLDL. In terms of processing, phosphorylated by FAM20C in the extracellular medium.

The protein localises to the secreted. Its subcellular location is the extracellular space. It is found in the extracellular matrix. The protein resides in the extracellular vesicle. It localises to the endosome. The protein localises to the multivesicular body. Functionally, APOE is an apolipoprotein, a protein associating with lipid particles, that mainly functions in lipoprotein-mediated lipid transport between organs via the plasma and interstitial fluids. APOE is a core component of plasma lipoproteins and is involved in their production, conversion and clearance. Apolipoproteins are amphipathic molecules that interact both with lipids of the lipoprotein particle core and the aqueous environment of the plasma. As such, APOE associates with chylomicrons, chylomicron remnants, very low density lipoproteins (VLDL) and intermediate density lipoproteins (IDL) but shows a preferential binding to high-density lipoproteins (HDL). It also binds a wide range of cellular receptors including the LDL receptor/LDLR, the LDL receptor-related proteins LRP1, LRP2 and LRP8 and the very low-density lipoprotein receptor/VLDLR that mediate the cellular uptake of the APOE-containing lipoprotein particles. Finally, APOE also has a heparin-binding activity and binds heparan-sulfate proteoglycans on the surface of cells, a property that supports the capture and the receptor-mediated uptake of APOE-containing lipoproteins by cells. A main function of APOE is to mediate lipoprotein clearance through the uptake of chylomicrons, VLDLs, and HDLs by hepatocytes. APOE is also involved in the biosynthesis by the liver of VLDLs as well as their uptake by peripheral tissues ensuring the delivery of triglycerides and energy storage in muscle, heart and adipose tissues. By participating in the lipoprotein-mediated distribution of lipids among tissues, APOE plays a critical role in plasma and tissues lipid homeostasis. APOE is also involved in two steps of reverse cholesterol transport, the HDLs-mediated transport of cholesterol from peripheral tissues to the liver, and thereby plays an important role in cholesterol homeostasis. First, it is functionally associated with ABCA1 in the biogenesis of HDLs in tissues. Second, it is enriched in circulating HDLs and mediates their uptake by hepatocytes. APOE also plays an important role in lipid transport in the central nervous system, regulating neuron survival and sprouting. This is Apolipoprotein E (APOE) from Saimiri boliviensis boliviensis (Bolivian squirrel monkey).